Consider the following 510-residue polypeptide: JmjC domain-containing histone demethylation protein 1 (510 aa).

The PHD-type zinc finger occupies 2-53 (PNRCDFCTSSSTKDKQQWTQCDGCDRWVHDVCVSITDPVSYAKYHCPTCTKT). The 150-residue stretch at 216–365 (TLVRELDLVD…TQIDIAGIEV (150 aa)) folds into the JmjC domain. Threonine 255 contacts substrate. The Fe cation site is built by histidine 258 and aspartate 260. Residue lysine 275 participates in substrate binding. Position 333 (histidine 333) interacts with Fe cation. The disordered stretch occupies residues 475–510 (KGESKEKHKIESQLPEEKILQGSKLESKEEVQTENF). Residues 477 to 510 (ESKEKHKIESQLPEEKILQGSKLESKEEVQTENF) show a composition bias toward basic and acidic residues.

The protein belongs to the JHDM1 histone demethylase family. It depends on Fe(2+) as a cofactor.

The protein localises to the nucleus. The catalysed reaction is N(6),N(6)-dimethyl-L-lysyl(36)-[histone H3] + 2 2-oxoglutarate + 2 O2 = L-lysyl(36)-[histone H3] + 2 formaldehyde + 2 succinate + 2 CO2. Histone demethylase that specifically demethylates 'Lys-36' of histone H3, thereby playing a central role in histone code. The chain is JmjC domain-containing histone demethylation protein 1 (JHD1) from Yarrowia lipolytica (strain CLIB 122 / E 150) (Yeast).